Consider the following 1054-residue polypeptide: Trehalose synthase complex regulatory subunit TPS3 (1054 aa).

Residues 112–133 are disordered; that stretch reads AANSGIPPANNPVSSGSTAQRP. Positions 122-132 are enriched in polar residues; the sequence is NPVSSGSTAQR. Phosphoserine occurs at positions 148, 150, and 181. 2 disordered regions span residues 155 to 203 and 223 to 250; these read ASSI…PVSK and QQQA…SSSN. Residues 170-182 show a composition bias toward polar residues; that stretch reads LSSSLMKNPNLSF. The span at 235-249 shows a compositional bias: low complexity; sequence SGSTAGDSSIASSSS. Thr265 is modified (phosphothreonine). Phosphoserine occurs at positions 267 and 273. The segment at 287–778 is glycosyltransferase; the sequence is KFGGYSNNAK…SNQETSTVFN (492 aa). Ser960 is modified (phosphoserine).

In the N-terminal section; belongs to the glycosyltransferase 20 family. As to quaternary structure, the trehalose synthase complex is composed of the two catalytic subunits TPS1 and TPS2 and at least one of the two regulatory subunits TPS3 or TSL1.

The protein localises to the cytoplasm. Functionally, regulatory subunit of the trehalose synthase complex that catalyzes the production of trehalose from glucose-6-phosphate and UDP-glucose in a two step process. May stabilize the trehalose synthase complex. This is Trehalose synthase complex regulatory subunit TPS3 (TPS3) from Saccharomyces cerevisiae (strain ATCC 204508 / S288c) (Baker's yeast).